Here is a 521-residue protein sequence, read N- to C-terminus: Envelope glycoprotein C homolog (521 aa).

Residues 1-21 form the signal peptide; sequence MGPLGRAWLIAAIFAWALLSA. At 22–475 the chain is on the virion surface side; the sequence is RRGLAEEAEA…DASPGLIGSP (454 aa). The tract at residues 24-138 is disordered; sequence GLAEEAEASP…PSKAPPKERK (115 aa). Over residues 41–54 the composition is skewed to low complexity; that stretch reads PTETESSAGTTGAT. The segment covering 66–76 has biased composition (polar residues); sequence EDSTPGATTPV. The N-linked (GlcNAc...) asparagine; by host glycan is linked to Asn-111. Cys-142 and Cys-159 are oxidised to a cystine. In terms of domain architecture, Ig-like V-type spans 155 to 227; the sequence is LYVHCGVADN…LGDNYIFPSP (73 aa). N-linked (GlcNAc...) asparagine; by host glycosylation is found at Asn-164 and Asn-208. Intrachain disulfides connect Cys-290–Cys-351, Cys-390–Cys-447, and Cys-394–Cys-421. An Ig-like C2-type domain is found at 386–451; the sequence is GEAVCEARCV…PVDYTCTATG (66 aa). Residues 476-496 form a helical membrane-spanning segment; that stretch reads VLVSVVAVACGLGAVGLLLVA. At 497–521 the chain is on the cytoplasmic side; sequence ASCLRRKARVIQPGLTRARALGSAP.

Belongs to the herpesviridae glycoprotein C family. In terms of assembly, interacts with host complement component C3; this interaction inhibits host immune response by disregulating complement cascade.

Its subcellular location is the virion membrane. In terms of biological role, essential for the initial attachment to heparan sulfate moieties of the host cell surface proteoglycans. Plays also a role in host immune evasion by inhibiting the host complement cascade activation. In Bovine herpesvirus 1.1 (strain Cooper) (BoHV-1), this protein is Envelope glycoprotein C homolog (gC).